Consider the following 134-residue polypeptide: Small ribosomal subunit protein uS8c (134 aa).

The protein belongs to the universal ribosomal protein uS8 family. In terms of assembly, part of the 30S ribosomal subunit.

It localises to the plastid. One of the primary rRNA binding proteins, it binds directly to 16S rRNA central domain where it helps coordinate assembly of the platform of the 30S subunit. The polypeptide is Small ribosomal subunit protein uS8c (rps8) (Cuscuta obtusiflora (Peruvian dodder)).